Reading from the N-terminus, the 324-residue chain is Glyoxylate/hydroxypyruvate reductase B (324 aa).

Residues Arg237 and Glu266 contribute to the active site. His285 acts as the Proton donor in catalysis.

It belongs to the D-isomer specific 2-hydroxyacid dehydrogenase family. GhrB subfamily. As to quaternary structure, homodimer.

Its subcellular location is the cytoplasm. The catalysed reaction is glycolate + NADP(+) = glyoxylate + NADPH + H(+). The enzyme catalyses (R)-glycerate + NAD(+) = 3-hydroxypyruvate + NADH + H(+). It catalyses the reaction (R)-glycerate + NADP(+) = 3-hydroxypyruvate + NADPH + H(+). Catalyzes the NADPH-dependent reduction of glyoxylate and hydroxypyruvate into glycolate and glycerate, respectively. The polypeptide is Glyoxylate/hydroxypyruvate reductase B (Salmonella dublin (strain CT_02021853)).